Reading from the N-terminus, the 316-residue chain is 4-hydroxy-3-methylbut-2-enyl diphosphate reductase (316 aa).

Residue cysteine 17 participates in [4Fe-4S] cluster binding. (2E)-4-hydroxy-3-methylbut-2-enyl diphosphate contacts are provided by histidine 46 and histidine 79. Residues histidine 46 and histidine 79 each contribute to the dimethylallyl diphosphate site. Isopentenyl diphosphate-binding residues include histidine 46 and histidine 79. Cysteine 101 contacts [4Fe-4S] cluster. Histidine 129 is a (2E)-4-hydroxy-3-methylbut-2-enyl diphosphate binding site. Histidine 129 lines the dimethylallyl diphosphate pocket. Histidine 129 is a binding site for isopentenyl diphosphate. Glutamate 131 acts as the Proton donor in catalysis. Residue threonine 170 participates in (2E)-4-hydroxy-3-methylbut-2-enyl diphosphate binding. Position 200 (cysteine 200) interacts with [4Fe-4S] cluster. The (2E)-4-hydroxy-3-methylbut-2-enyl diphosphate site is built by serine 228, serine 229, asparagine 230, and serine 273. Residues serine 228, serine 229, asparagine 230, and serine 273 each contribute to the dimethylallyl diphosphate site. 4 residues coordinate isopentenyl diphosphate: serine 228, serine 229, asparagine 230, and serine 273.

The protein belongs to the IspH family. Requires [4Fe-4S] cluster as cofactor.

It catalyses the reaction isopentenyl diphosphate + 2 oxidized [2Fe-2S]-[ferredoxin] + H2O = (2E)-4-hydroxy-3-methylbut-2-enyl diphosphate + 2 reduced [2Fe-2S]-[ferredoxin] + 2 H(+). It carries out the reaction dimethylallyl diphosphate + 2 oxidized [2Fe-2S]-[ferredoxin] + H2O = (2E)-4-hydroxy-3-methylbut-2-enyl diphosphate + 2 reduced [2Fe-2S]-[ferredoxin] + 2 H(+). Its pathway is isoprenoid biosynthesis; dimethylallyl diphosphate biosynthesis; dimethylallyl diphosphate from (2E)-4-hydroxy-3-methylbutenyl diphosphate: step 1/1. It functions in the pathway isoprenoid biosynthesis; isopentenyl diphosphate biosynthesis via DXP pathway; isopentenyl diphosphate from 1-deoxy-D-xylulose 5-phosphate: step 6/6. In terms of biological role, catalyzes the conversion of 1-hydroxy-2-methyl-2-(E)-butenyl 4-diphosphate (HMBPP) into a mixture of isopentenyl diphosphate (IPP) and dimethylallyl diphosphate (DMAPP). Acts in the terminal step of the DOXP/MEP pathway for isoprenoid precursor biosynthesis. The protein is 4-hydroxy-3-methylbut-2-enyl diphosphate reductase of Ruegeria pomeroyi (strain ATCC 700808 / DSM 15171 / DSS-3) (Silicibacter pomeroyi).